The chain runs to 207 residues: MARYLGPKAKLSRREGTDLFLKSARRSIADKAKFDSKPGQHGRTSGARTSDFGLQLREKQKVKRMYGVLEKQFRRYFEAADRRKGNTGANLLSLLESRLDNVVYRMGFGSTRAEARQLVSHKAITVNGQSVNIASYLVKPGDVVAVREKSKKQARIVEALQLAQQVGIPAWVEVNADKVEGTFKKAPDRDEFGADINESLIVELYSR.

The interval 31–53 (KAKFDSKPGQHGRTSGARTSDFG) is disordered. The 61-residue stretch at 97–157 (SRLDNVVYRM…EKSKKQARIV (61 aa)) folds into the S4 RNA-binding domain.

Belongs to the universal ribosomal protein uS4 family. Part of the 30S ribosomal subunit. Contacts protein S5. The interaction surface between S4 and S5 is involved in control of translational fidelity.

One of the primary rRNA binding proteins, it binds directly to 16S rRNA where it nucleates assembly of the body of the 30S subunit. In terms of biological role, with S5 and S12 plays an important role in translational accuracy. This chain is Small ribosomal subunit protein uS4, found in Paracidovorax citrulli (strain AAC00-1) (Acidovorax citrulli).